The chain runs to 180 residues: Beta-lactoglobulin (180 aa).

The first 18 residues, 1-18, serve as a signal peptide directing secretion; sequence MKCLLLALGLALACGIQA. Disulfide bonds link cysteine 84–cysteine 178, cysteine 124–cysteine 137, and cysteine 124–cysteine 139.

It belongs to the calycin superfamily. Lipocalin family. In terms of assembly, under physiological conditions beta-lactoglobulin exists as an equilibrium mixture of monomeric and dimeric forms. Interaction with LMBR1L is controversial. Post-translationally, alternate disulfide bonds occur in equal amounts. Synthesized in mammary gland and secreted in milk.

It is found in the secreted. In terms of biological role, primary component of whey, it binds retinol and is probably involved in the transport of that molecule. This Capra hircus (Goat) protein is Beta-lactoglobulin (LGB).